Consider the following 143-residue polypeptide: Putative pre-16S rRNA nuclease (143 aa).

It belongs to the YqgF nuclease family.

The protein localises to the cytoplasm. In terms of biological role, could be a nuclease involved in processing of the 5'-end of pre-16S rRNA. In Lactococcus lactis subsp. cremoris (strain SK11), this protein is Putative pre-16S rRNA nuclease.